The following is a 79-amino-acid chain: Small ribosomal subunit protein uS17 (79 aa).

It belongs to the universal ribosomal protein uS17 family. As to quaternary structure, part of the 30S ribosomal subunit.

Functionally, one of the primary rRNA binding proteins, it binds specifically to the 5'-end of 16S ribosomal RNA. In Rhizobium etli (strain CIAT 652), this protein is Small ribosomal subunit protein uS17.